The following is a 134-amino-acid chain: Probable glycine cleavage system H protein (134 aa).

A Lipoyl-binding domain is found at 29-110; the sequence is TVLVGISDYA…PYENWIAKLK (82 aa). Residue K70 is modified to N6-lipoyllysine.

It belongs to the GcvH family. As to quaternary structure, the glycine cleavage system is composed of four proteins: P, T, L and H. (R)-lipoate is required as a cofactor.

In terms of biological role, the glycine cleavage system catalyzes the degradation of glycine. The H protein shuttles the methylamine group of glycine from the P protein to the T protein. This Thermococcus kodakarensis (strain ATCC BAA-918 / JCM 12380 / KOD1) (Pyrococcus kodakaraensis (strain KOD1)) protein is Probable glycine cleavage system H protein.